The primary structure comprises 142 residues: Fluoride-specific ion channel FluC 1 (142 aa).

The next 4 helical transmembrane spans lie at 23-43 (VNIA…YLID), 54-74 (LPLG…GLIG), 79-99 (GWLL…FSTF), and 116-136 (LGNV…AVSL). Residues G91 and T94 each coordinate Na(+).

It belongs to the fluoride channel Fluc/FEX (TC 1.A.43) family.

It is found in the cell membrane. It carries out the reaction fluoride(in) = fluoride(out). Its activity is regulated as follows. Na(+) is not transported, but it plays an essential structural role and its presence is essential for fluoride channel function. Fluoride-specific ion channel. Important for reducing fluoride concentration in the cell, thus reducing its toxicity. In Nocardia farcinica (strain IFM 10152), this protein is Fluoride-specific ion channel FluC 1.